The chain runs to 416 residues: Kynureninase (416 aa).

Residues threonine 97, serine 98, 129–132 (FPTD), threonine 172, aspartate 201, histidine 204, and tyrosine 226 each bind pyridoxal 5'-phosphate. An N6-(pyridoxal phosphate)lysine modification is found at lysine 227. Residues tryptophan 256 and threonine 282 each coordinate pyridoxal 5'-phosphate.

The protein belongs to the kynureninase family. In terms of assembly, homodimer. Pyridoxal 5'-phosphate is required as a cofactor.

The enzyme catalyses L-kynurenine + H2O = anthranilate + L-alanine + H(+). It carries out the reaction 3-hydroxy-L-kynurenine + H2O = 3-hydroxyanthranilate + L-alanine + H(+). The protein operates within amino-acid degradation; L-kynurenine degradation; L-alanine and anthranilate from L-kynurenine: step 1/1. Its pathway is cofactor biosynthesis; NAD(+) biosynthesis; quinolinate from L-kynurenine: step 2/3. Its function is as follows. Catalyzes the cleavage of L-kynurenine (L-Kyn) and L-3-hydroxykynurenine (L-3OHKyn) into anthranilic acid (AA) and 3-hydroxyanthranilic acid (3-OHAA), respectively. In Pseudomonas fluorescens, this protein is Kynureninase.